An 86-amino-acid chain; its full sequence is Putative defensin-like protein 244 (86 aa).

The first 22 residues, 1–22, serve as a signal peptide directing secretion; sequence MKGIAMLLVSCLLFSFLSTNLA. Intrachain disulfides connect Cys28/Cys83, Cys38/Cys67, Cys48/Cys77, and Cys65/Cys79.

This sequence belongs to the DEFL family.

It is found in the secreted. This is Putative defensin-like protein 244 (SCRL11) from Arabidopsis thaliana (Mouse-ear cress).